A 461-amino-acid chain; its full sequence is Asparagine--tRNA ligase (461 aa).

It belongs to the class-II aminoacyl-tRNA synthetase family. As to quaternary structure, homodimer.

It is found in the cytoplasm. It carries out the reaction tRNA(Asn) + L-asparagine + ATP = L-asparaginyl-tRNA(Asn) + AMP + diphosphate + H(+). The protein is Asparagine--tRNA ligase of Geobacter metallireducens (strain ATCC 53774 / DSM 7210 / GS-15).